The chain runs to 432 residues: Glutamate-1-semialdehyde 2,1-aminomutase (432 aa).

At Lys271 the chain carries N6-(pyridoxal phosphate)lysine.

This sequence belongs to the class-III pyridoxal-phosphate-dependent aminotransferase family. HemL subfamily. In terms of assembly, homodimer. It depends on pyridoxal 5'-phosphate as a cofactor.

It localises to the cytoplasm. The catalysed reaction is (S)-4-amino-5-oxopentanoate = 5-aminolevulinate. It functions in the pathway porphyrin-containing compound metabolism; protoporphyrin-IX biosynthesis; 5-aminolevulinate from L-glutamyl-tRNA(Glu): step 2/2. It participates in porphyrin-containing compound metabolism; chlorophyll biosynthesis. The sequence is that of Glutamate-1-semialdehyde 2,1-aminomutase from Prochlorococcus marinus (strain MIT 9211).